The chain runs to 785 residues: MEKKVEAILEFDKIKKQLTEFASSSLGEQAILELAPATDFQVVQKTQLETEEGAKIIRLRGSAPITGLTDVFAHLKRLEIGGDLNGLEIYQIGSNLRVSRQMKNFMNDLLEIGVELPLLGALSDELLVLKEVEEDIAISVDESGKVLDTASEALSTIRRTLRRTEDRVREKLESYLRDRNASKMLSDAVITIRNDRYVIPVKQEYKGHYGGIVHDQSASGQTLFIEPQSVVDLNNERKALQAKEKQEIERILAEISASLAAWINEIHHNTFILGRFDFIFAKARFGKAMKAVTPHLSDAGVVHLIAARHPLLDAAKVVANDIYLGEDFTTIVITGPNTGGKTITLKTLGLLTLMAQSGLQIPAQEDSTIAVFEHVFADIGDEQSIEQSLSTFSSHMTNIVSILGNVNQKSLILYDELGAGTDPQEGAALAIAILDASHAKGASVVATTHYPELKAYGYNRVHATNASVEFNVETLSPTYKLLIGVPGRSNAFDISRRLGLSENIITEARSLVDTESADLNDMISSLEEKRNLAETEYEEARELARGADNLLKDLQKEISNYYQQKDKLIEQASEKAATIVEKAEAEAEEIIHELRTMQLNGAAGIKEHELIDAKTRLGNAKPKTINKTIPQAPKQKPHVFQEGDNVRVLSLGQKGTLLNKISDKEWNVQIGIIKMKIKTTDLEYIQPEKPKKQRIITSVHSSGSPAKSELDLRGERYEDALQKVDKYLDEALLAGYPQVAIIHGKGTGALRTGVTEYLKNHRMVKSIRFGAAAEGGNGVTIVEFK.

Residue 335 to 342 (GPNTGGKT) coordinates ATP. The region spanning 710–785 (LDLRGERYED…GNGVTIVEFK (76 aa)) is the Smr domain.

This sequence belongs to the DNA mismatch repair MutS family. MutS2 subfamily. In terms of assembly, homodimer. Binds to stalled ribosomes, contacting rRNA.

In terms of biological role, endonuclease that is involved in the suppression of homologous recombination and thus may have a key role in the control of bacterial genetic diversity. Its function is as follows. Acts as a ribosome collision sensor, splitting the ribosome into its 2 subunits. Detects stalled/collided 70S ribosomes which it binds and splits by an ATP-hydrolysis driven conformational change. Acts upstream of the ribosome quality control system (RQC), a ribosome-associated complex that mediates the extraction of incompletely synthesized nascent chains from stalled ribosomes and their subsequent degradation. Probably generates substrates for RQC. The sequence is that of Endonuclease MutS2 from Listeria monocytogenes serotype 4b (strain CLIP80459).